Reading from the N-terminus, the 77-residue chain is uncharacterized protein (77 aa).

Residues 5-74 (SYIVQLKDSV…FEPDQEMHTM (70 aa)) enclose the Inhibitor I9 domain.

It belongs to the protease inhibitor I9 family.

Its subcellular location is the cytoplasm. It is found in the nucleus. This is an uncharacterized protein from Schizosaccharomyces pombe (strain 972 / ATCC 24843) (Fission yeast).